The primary structure comprises 184 residues: U3 small nucleolar ribonucleoprotein protein IMP3 (184 aa).

In terms of domain architecture, S4 RNA-binding spans 109–175 (RRLPTVLLKL…IKRHVLEYNE (67 aa)).

The protein belongs to the universal ribosomal protein uS4 family. As to quaternary structure, part of the small subunit (SSU) processome, composed of more than 70 proteins and the RNA chaperone small nucleolar RNA (snoRNA) U3. Component of a heterotrimeric complex containing IMP3, IMP4 and MPHOSPH10. Interacts with MPHOSPH10.

It is found in the nucleus. It localises to the nucleolus. In terms of biological role, component of the 60-80S U3 small nucleolar ribonucleoprotein (U3 snoRNP). Required for the early cleavages during pre-18S ribosomal RNA processing. Part of the small subunit (SSU) processome, first precursor of the small eukaryotic ribosomal subunit. During the assembly of the SSU processome in the nucleolus, many ribosome biogenesis factors, an RNA chaperone and ribosomal proteins associate with the nascent pre-rRNA and work in concert to generate RNA folding, modifications, rearrangements and cleavage as well as targeted degradation of pre-ribosomal RNA by the RNA exosome. The sequence is that of U3 small nucleolar ribonucleoprotein protein IMP3 from Homo sapiens (Human).